A 1341-amino-acid chain; its full sequence is Pleckstrin homology domain-containing family G member 3 (1341 aa).

Residues 1–68 are disordered; sequence MPVSTALHQD…PNSNNNSSGW (68 aa). The span at 18 to 29 shows a compositional bias: low complexity; that stretch reads SLVSTTSSSGSS. 2 stretches are compositionally biased toward polar residues: residues 42-51 and 59-68; these read SEASAQNGTG and PNSNNNSSGW. Ser-76 bears the Phosphoserine mark. The region spanning 93–272 is the DH domain; sequence YLGRVVREIV…TCVAWYINDM (180 aa). One can recognise a PH domain in the interval 296-394; the sequence is DLTTYGELVL…WTHHIKRLIL (99 aa). Residues Ser-433 and Ser-502 each carry the phosphoserine modification. The disordered stretch occupies residues 433–482; that stretch reads SQDEVSSHVRQGRRQSEPGHTLFSRATLPSRQQGFEMPGLKGRRKSEPTR. Disordered stretches follow at residues 508-657 and 684-715; these read DFGQ…EFPE and PEGS…LLPP. Composition is skewed to acidic residues over residues 529-541 and 570-580; these read ELEE…EEEE and GSEEEEEEEES. Phosphoserine is present on residues Ser-571, Ser-694, Ser-695, Ser-737, Ser-759, Ser-762, and Ser-766. Residues 695 to 707 show a composition bias toward acidic residues; sequence SEEEEEEEMEAAQ. The tract at residues 775 to 832 is disordered; the sequence is SIGDSLSNPPTPEVIIGADMVTDNGPSVNGTESPSAGSGCPTEQDRSSCKKKESALST. A compositionally biased stretch (polar residues) spans 798–810; that stretch reads NGPSVNGTESPSA. Basic and acidic residues predominate over residues 817–832; sequence EQDRSSCKKKESALST. A phosphoserine mark is found at Ser-862, Ser-899, Ser-900, and Ser-947. Disordered stretches follow at residues 876-930, 939-958, 1071-1097, and 1117-1162; these read SRFN…EFCP, ERME…SQAN, KVTP…SGGK, and HGTS…PFDT. Residues 939-948 are compositionally biased toward basic and acidic residues; that stretch reads ERMESSERSP. A compositionally biased stretch (polar residues) spans 949-958; the sequence is RTGSGQSQAN. 7 positions are modified to phosphoserine: Ser-1129, Ser-1134, Ser-1136, Ser-1141, Ser-1155, Ser-1158, and Ser-1201. Polar residues predominate over residues 1135–1162; the sequence is FSPSAVSPRTTSPGARSSARSPLSPFDT. Disordered stretches follow at residues 1204-1249 and 1271-1341; these read ENIV…LNGG and KGPH…NSVG. Basic and acidic residues predominate over residues 1309–1320; sequence QPKEHGPRDSAD.

The protein localises to the cytoplasm. It localises to the cytoskeleton. Functionally, plays a role in controlling cell polarity and cell motility by selectively binding newly polymerized actin and activating RAC1 and CDC42 to enhance local actin polymerization. The protein is Pleckstrin homology domain-containing family G member 3 of Mus musculus (Mouse).